Reading from the N-terminus, the 225-residue chain is Enolase-phosphatase E1 (225 aa).

The protein belongs to the HAD-like hydrolase superfamily. MasA/MtnC family. Monomer. Mg(2+) serves as cofactor.

It carries out the reaction 5-methylsulfanyl-2,3-dioxopentyl phosphate + H2O = 1,2-dihydroxy-5-(methylsulfanyl)pent-1-en-3-one + phosphate. It participates in amino-acid biosynthesis; L-methionine biosynthesis via salvage pathway; L-methionine from S-methyl-5-thio-alpha-D-ribose 1-phosphate: step 3/6. Its pathway is amino-acid biosynthesis; L-methionine biosynthesis via salvage pathway; L-methionine from S-methyl-5-thio-alpha-D-ribose 1-phosphate: step 4/6. Its function is as follows. Bifunctional enzyme that catalyzes the enolization of 2,3-diketo-5-methylthiopentyl-1-phosphate (DK-MTP-1-P) into the intermediate 2-hydroxy-3-keto-5-methylthiopentenyl-1-phosphate (HK-MTPenyl-1-P), which is then dephosphorylated to form the acireductone 1,2-dihydroxy-3-keto-5-methylthiopentene (DHK-MTPene). The chain is Enolase-phosphatase E1 from Pseudomonas aeruginosa (strain UCBPP-PA14).